The primary structure comprises 156 residues: ATP synthase subunit b (156 aa).

A helical membrane pass occupies residues 7-29 (LLGQAIAFALFVWFCMKYVWPPI).

This sequence belongs to the ATPase B chain family. F-type ATPases have 2 components, F(1) - the catalytic core - and F(0) - the membrane proton channel. F(1) has five subunits: alpha(3), beta(3), gamma(1), delta(1), epsilon(1). F(0) has three main subunits: a(1), b(2) and c(10-14). The alpha and beta chains form an alternating ring which encloses part of the gamma chain. F(1) is attached to F(0) by a central stalk formed by the gamma and epsilon chains, while a peripheral stalk is formed by the delta and b chains.

The protein localises to the cell inner membrane. Its function is as follows. F(1)F(0) ATP synthase produces ATP from ADP in the presence of a proton or sodium gradient. F-type ATPases consist of two structural domains, F(1) containing the extramembraneous catalytic core and F(0) containing the membrane proton channel, linked together by a central stalk and a peripheral stalk. During catalysis, ATP synthesis in the catalytic domain of F(1) is coupled via a rotary mechanism of the central stalk subunits to proton translocation. Functionally, component of the F(0) channel, it forms part of the peripheral stalk, linking F(1) to F(0). This Aliivibrio salmonicida (strain LFI1238) (Vibrio salmonicida (strain LFI1238)) protein is ATP synthase subunit b.